A 488-amino-acid chain; its full sequence is MARLSSLLSFSLALLTFLHGSTAQQFPNECQLDQLNALEPSHVLKAEAGRIEVWDHHAPQLRCSGVSFVRYIIESKGLYLPSFFSTARLSFVAKGEGLMGRVVLCAETFQDSSVFQPSGGSPFGEGQGQGQQGQGQGHQGQGQGQQGQQGQQGQQSQGQGFRDMHQKVEHIRTGDTIATHPGVAQWFYNDGNQPLVIVSVLDLASHQNQLDRNPRPFYLAGNNPQGQVWIEGREQQPQKNILNGFTPEVLAKAFKIDVRTAQQLQNQQDNRGNIIRVQGPFSVIRPPLRSQRPQEEVNGLEETICSARCTDNLDDPSNADVYKPQLGYISTLNSYDLPILRFLRLSALRGSIRQNAMVLPQWNANANAVLYVTDGEAHVQVVNDNGDRVFDGQVSQGQLLSIPQGFSVVKRATSEQFRWIEFKTNANAQINTLAGRTSVLRGLPLEVISNGYQISLEEARRVKFNTIETTLTHSSGPASYGGPRKADA.

The first 23 residues, 1–23 (MARLSSLLSFSLALLTFLHGSTA), serve as a signal peptide directing secretion. 2 disulfide bridges follow: cysteine 30/cysteine 63 and cysteine 105/cysteine 305. Cupin type-1 domains follow at residues 35–262 (LNAL…RTAQ) and 311–460 (DNLD…EEAR). The interval 116 to 163 (QPSGGSPFGEGQGQGQQGQGQGHQGQGQGQQGQQGQQGQQSQGQGFRD) is disordered. Over residues 121–147 (SPFGEGQGQGQQGQGQGHQGQGQGQQG) the composition is skewed to gly residues. The segment covering 148-160 (QQGQQGQQSQGQG) has biased composition (low complexity).

This sequence belongs to the 11S seed storage protein (globulins) family. As to quaternary structure, hexamer; each subunit is composed of an acidic and a basic chain derived from a single precursor and linked by a disulfide bond.

The protein localises to the rough endoplasmic reticulum. Functionally, this is a seed storage protein. This Brassica napus (Rape) protein is Cruciferin (CRUA).